Consider the following 182-residue polypeptide: Orotate phosphoribosyltransferase (182 aa).

Residues arginine 93, lysine 94, lysine 97, and 119–127 (EDIATTGTS) contribute to the 5-phospho-alpha-D-ribose 1-diphosphate site. Residues threonine 123 and arginine 151 each coordinate orotate.

The protein belongs to the purine/pyrimidine phosphoribosyltransferase family. PyrE subfamily. As to quaternary structure, homodimer. Mg(2+) serves as cofactor.

It catalyses the reaction orotidine 5'-phosphate + diphosphate = orotate + 5-phospho-alpha-D-ribose 1-diphosphate. It functions in the pathway pyrimidine metabolism; UMP biosynthesis via de novo pathway; UMP from orotate: step 1/2. In terms of biological role, catalyzes the transfer of a ribosyl phosphate group from 5-phosphoribose 1-diphosphate to orotate, leading to the formation of orotidine monophosphate (OMP). The protein is Orotate phosphoribosyltransferase of Haloquadratum walsbyi (strain DSM 16790 / HBSQ001).